A 620-amino-acid chain; its full sequence is MFKLFTARQHDKIWDFDGGIHPPEMKLQSSTVPMRIAPLPDQLIIPLQQHLGPEGELRVRAGEQVLKGQPLTVGRGRTVPVHAPTSGMITAIAPHTTAHPSGLAELCVHITPDGEDRWREQQPWADYRQRDKMALLDRIHQAGIAGLGGAGFPTASKLQGGLNGIITLIINAAECEPYITADDRLMQEHADEVITGIHILRHLLQPQQVLIGIEDNKPEAIAALQRALRGQDDIHLRVVPTKYPSGGAKQLTKILTGKEVPFGKHSSSIGVLMQNVGTVVAIKRAVIDDEPLIERVVTLTGDALSSPGNFWARIGTPVLYLLKLAGFKPQNPPMVIMGGPLMGFTLPSLDVPIVKISNCILAPAETEMGLSEPEQSCIRCGLCVDACPAGLLPQQLYWFSRGEEHEKARNHNLFDCIECGACAYVCPSNIPLVQYYRQEKAEIRALDQESARAAEAKARFEAKQARLAREKLARELRHKQAAVKLTDADQQTVDAAVSRLTRQSDGSESVINIPAGQMPDNSAVIAAREARKAQARARQAEKQQARSTEETTDVVDPRQAAVAAAIARVKAKKAVQAQHVTTDVAEAGSEAMAEDPRKAAVAAAIARVKAKKAAQAINPD.

4Fe-4S ferredoxin-type domains are found at residues Thr366–Tyr397 and Lys407–Tyr436. Residues Cys377, Cys380, Cys383, Cys387, Cys416, Cys419, Cys422, and Cys426 each contribute to the [4Fe-4S] cluster site.

It belongs to the 4Fe4S bacterial-type ferredoxin family. RnfC subfamily. The complex is composed of six subunits: RnfA, RnfB, RnfC, RnfD, RnfE and RnfG. [4Fe-4S] cluster serves as cofactor.

Its subcellular location is the cell inner membrane. In terms of biological role, part of a membrane-bound complex that couples electron transfer with translocation of ions across the membrane. The chain is Ion-translocating oxidoreductase complex subunit C from Yersinia pestis bv. Antiqua (strain Antiqua).